The sequence spans 310 residues: MSTVTLSSGYEMPVIGLGLWRLEKDELKEVILNAIKIGYRHFDCAAHYKSEADVGEALAEAFKTGLVKREELFITTKIWNSDHGHVVEACKNSLEKLQIDYLDLYLVHYPMPTKHNAIGKTASLLGEDKVLDIDVTISLQQTWEGMEKTVSLGLVRSIGLSNYELFLTRDCLAYSKIKPAVSQFETHPYFQRDSLVKFCMKHGVLPTAHTPLGGAAANKDMFGSVSPLDDPVLNDVAKKYGKSVAQICLRWGIQRKTAVIPKSSKIQRLKENLEVLEFQLSDEDMQLIYSIDRKYRTSLPSKTWGLDVYA.

Tyr48 (proton donor) is an active-site residue. His108 is a substrate binding site. NADP(+) is bound at residue 210–272; sequence TPLGGAAANK…SSKIQRLKEN (63 aa).

It belongs to the aldo/keto reductase family.

It carries out the reaction D-sorbitol 6-phosphate + NADP(+) = aldehydo-D-glucose 6-phosphate + NADPH + H(+). Synthesizes sorbitol-6-phosphate, a key intermediate in the synthesis of sorbitol which is a major photosynthetic product in many members of the Rosaceae family. In Malus domestica (Apple), this protein is NADP-dependent D-sorbitol-6-phosphate dehydrogenase (S6PDH).